A 257-amino-acid polypeptide reads, in one-letter code: MSDLKKAAQQAISLMDLTTLNDDDTDQKVIELCHKAKTPAGDTAAICIYPRFIPIARKTLNEIGGDDIKIATVTNFPHGNDDIAIAVLETRAAVAYGADEVDVVFPYRALMEGNETVGFELVKACKEACGEDTILKVIIESGVLADPALIRKASELSIDAGADFIKTSTGKVAVNATLEAAEIMMTVISEKNPKVGFKPAGGVKDAAAAAEFLGVAARLLGDDWATPATFRFGASSLLTNLLHTLELADAPQGAQGY.

Asp-102 serves as the catalytic Proton donor/acceptor. Catalysis depends on Lys-166, which acts as the Schiff-base intermediate with acetaldehyde. The active-site Proton donor/acceptor is the Lys-198.

The protein belongs to the DeoC/FbaB aldolase family. DeoC type 2 subfamily.

Its subcellular location is the cytoplasm. The catalysed reaction is 2-deoxy-D-ribose 5-phosphate = D-glyceraldehyde 3-phosphate + acetaldehyde. Its pathway is carbohydrate degradation; 2-deoxy-D-ribose 1-phosphate degradation; D-glyceraldehyde 3-phosphate and acetaldehyde from 2-deoxy-alpha-D-ribose 1-phosphate: step 2/2. In terms of biological role, catalyzes a reversible aldol reaction between acetaldehyde and D-glyceraldehyde 3-phosphate to generate 2-deoxy-D-ribose 5-phosphate. In Shewanella halifaxensis (strain HAW-EB4), this protein is Deoxyribose-phosphate aldolase.